We begin with the raw amino-acid sequence, 405 residues long: SPbeta prophage-derived uncharacterized protein YonJ (405 aa).

A coiled-coil region spans residues 72 to 101; the sequence is DESNNSLLELELKKVEIMEERKKLQAVKHE.

The protein is SPbeta prophage-derived uncharacterized protein YonJ (yonJ) of Bacillus subtilis (strain 168).